A 156-amino-acid polypeptide reads, in one-letter code: Eosinophil cationic-type ribonuclease 3 (156 aa).

A signal peptide spans 1–25 (MGPKLLESRLCLLLLLRLVLMLASC). His-38 (proton acceptor) is an active-site residue. The N-linked (GlcNAc...) asparagine glycan is linked to Asn-41. Disulfide bonds link Cys-47–Cys-106, Cys-61–Cys-119, Cys-79–Cys-134, and Cys-86–Cys-94. 62–66 (KGLNT) lines the substrate pocket. N-linked (GlcNAc...) asparagine glycans are attached at residues Asn-89, Asn-96, and Asn-107. His-151 (proton donor) is an active-site residue.

The protein belongs to the pancreatic ribonuclease family.

The protein is Eosinophil cationic-type ribonuclease 3 (Ear3) of Mus musculus (Mouse).